The primary structure comprises 410 residues: Arginine deiminase (410 aa).

Catalysis depends on cysteine 399, which acts as the Amidino-cysteine intermediate.

It belongs to the arginine deiminase family.

Its subcellular location is the cytoplasm. It carries out the reaction L-arginine + H2O = L-citrulline + NH4(+). Its pathway is amino-acid degradation; L-arginine degradation via ADI pathway; carbamoyl phosphate from L-arginine: step 1/2. The protein is Arginine deiminase of Treponema denticola (strain ATCC 35405 / DSM 14222 / CIP 103919 / JCM 8153 / KCTC 15104).